The chain runs to 439 residues: Leukocyte immunoglobulin-like receptor subfamily A member 3 (439 aa).

Residues 1–23 form the signal peptide; that stretch reads MTPILTVLICLGLSLDPRTHVQA. Ig-like C2-type domains lie at 27-108, 119-224, 226-315, and 326-415; these read PKPT…AGLS, TGAY…GVSK, PSLS…DPLD, and PFLS…SDPL. Residues Cys-49 and Cys-98 are joined by a disulfide bond. N-linked (GlcNAc...) asparagine glycosylation is present at Asn-140. Intrachain disulfides connect Cys-145–Cys-197, Cys-157–Cys-167, and Cys-246–Cys-297. N-linked (GlcNAc...) asparagine glycans are attached at residues Asn-281, Asn-302, and Asn-341. A disulfide bridge connects residues Cys-346 and Cys-397. Residue Asn-431 is glycosylated (N-linked (GlcNAc...) asparagine).

Post-translationally, N-glycosylation is required for ligand binding. As to expression, detected in B-cells, and at lower levels in natural killer (NK) cells. Detected in peripheral blood monocytes and lung.

It localises to the secreted. In terms of biological role, acts as a soluble receptor for class I MHC antigens. Binds both classical and non-classical HLA class I molecules but with reduced affinities compared to LILRB1 or LILRB2. Binds with high affinity to the surface of monocytes, leading to abolish LPS-induced TNF-alpha production by monocytes. The polypeptide is Leukocyte immunoglobulin-like receptor subfamily A member 3 (LILRA3) (Homo sapiens (Human)).